A 535-amino-acid chain; its full sequence is Sterol 26-hydroxylase, mitochondrial (535 aa).

Residues 1-36 (MAALGCARLRWALLGPRVAGCGLCPQGARAKAAIPT) constitute a mitochondrion transit peptide. Lys-286 is subject to N6-acetyllysine. The sterol-binding stretch occupies residues 387-401 (PLLKAVLKETLRLYP). Cys-480 lines the heme pocket. The residue at position 524 (Lys-524) is an N6-acetyllysine.

It belongs to the cytochrome P450 family. Interacts with HSP70; this interaction is required for initial targeting to mitochondria. Heme serves as cofactor. As to expression, expressed in all tissues tested. Highest expression in liver and duodenum, followed by adrenal gland and lung. Low expression in kidney and spleen.

It localises to the mitochondrion inner membrane. The enzyme catalyses 5beta-cholestane-3alpha,7alpha,12alpha-triol + 6 reduced [adrenodoxin] + 3 O2 + 5 H(+) = (25R)-3alpha,7alpha,12alpha-trihydroxy-5beta-cholestan-26-oate + 6 oxidized [adrenodoxin] + 4 H2O. The catalysed reaction is cholestanol + 2 reduced [adrenodoxin] + O2 + 2 H(+) = (25R)-26-hydroxycholestanol + 2 oxidized [adrenodoxin] + H2O. It carries out the reaction (25R)-3beta-hydroxycholest-5-en-7-one-26-al + 2 reduced [adrenodoxin] + O2 + H(+) = (25R)-3beta-hydroxycholest-5-en-7-one-26-oate + 2 oxidized [adrenodoxin] + H2O. It catalyses the reaction (25R)-3beta,26-dihydroxycholest-5-en-7-one + 2 reduced [adrenodoxin] + O2 + 2 H(+) = (25R)-3beta-hydroxycholest-5-en-7-one-26-al + 2 oxidized [adrenodoxin] + 2 H2O. The enzyme catalyses 7-oxocholesterol + 2 reduced [adrenodoxin] + O2 + 2 H(+) = (25R)-3beta,26-dihydroxycholest-5-en-7-one + 2 oxidized [adrenodoxin] + H2O. The catalysed reaction is calciol + 2 reduced [adrenodoxin] + O2 + 2 H(+) = calcidiol + 2 oxidized [adrenodoxin] + H2O. It carries out the reaction (25R)-5beta-cholestane-3alpha,7alpha,12alpha,26-tetrol + 2 reduced [adrenodoxin] + O2 + 2 H(+) = (25R)-3alpha,7alpha,12alpha-trihydroxy-5beta-cholestan-26-al + 2 oxidized [adrenodoxin] + 2 H2O. It catalyses the reaction 2 reduced [adrenodoxin] + cholesterol + O2 + 2 H(+) = (25R)-cholest-5-ene-3beta,26-diol + 2 oxidized [adrenodoxin] + H2O. The enzyme catalyses (25R)-3beta,4beta-dihydroxycholest-5-en-26-al + 2 reduced [adrenodoxin] + O2 + H(+) = (25R)-3beta,4beta-dihydroxycholest-5-en-26-oate + 2 oxidized [adrenodoxin] + H2O. The catalysed reaction is (25R)-4beta,26-dihydroxycholesterol + 2 reduced [adrenodoxin] + O2 + 2 H(+) = (25R)-3beta,4beta-dihydroxycholest-5-en-26-al + 2 oxidized [adrenodoxin] + 2 H2O. It carries out the reaction 4beta-hydroxycholesterol + 2 reduced [adrenodoxin] + O2 + 2 H(+) = (25R)-4beta,26-dihydroxycholesterol + 2 oxidized [adrenodoxin] + H2O. It catalyses the reaction (25R)-3beta-hydroxy-5-cholesten-26-al + 2 reduced [adrenodoxin] + O2 + H(+) = (25R)-3beta-hydroxy-5-cholestenoate + 2 oxidized [adrenodoxin] + H2O. The enzyme catalyses (25R)-cholest-5-ene-3beta,26-diol + 2 reduced [adrenodoxin] + O2 + 2 H(+) = (25R)-3beta-hydroxy-5-cholesten-26-al + 2 oxidized [adrenodoxin] + 2 H2O. The catalysed reaction is (25R)-3alpha,7alpha,12alpha-trihydroxy-5beta-cholestan-26-al + 2 reduced [adrenodoxin] + O2 + H(+) = (25R)-3alpha,7alpha,12alpha-trihydroxy-5beta-cholestan-26-oate + 2 oxidized [adrenodoxin] + H2O. It carries out the reaction 5beta-cholestane-3alpha,7alpha,12alpha-triol + 2 reduced [adrenodoxin] + O2 + 2 H(+) = (25R)-5beta-cholestane-3alpha,7alpha,12alpha,26-tetrol + 2 oxidized [adrenodoxin] + H2O. It functions in the pathway hormone biosynthesis; cholecalciferol biosynthesis. The protein operates within steroid metabolism; cholesterol degradation. It participates in lipid metabolism; bile acid biosynthesis. In terms of biological role, cytochrome P450 monooxygenase that catalyzes regio- and stereospecific hydroxylation of cholesterol and its derivatives. Hydroxylates (with R stereochemistry) the terminal methyl group of cholesterol side-chain in a three step reaction to yield at first a C26 alcohol, then a C26 aldehyde and finally a C26 acid. Regulates cholesterol homeostasis by catalyzing the conversion of excess cholesterol to bile acids via both the 'neutral' (classic) and the 'acid' (alternative) pathways. May also regulate cholesterol homeostasis via generation of active oxysterols, which act as ligands for NR1H2 and NR1H3 nuclear receptors, modulating the transcription of genes involved in lipid metabolism. Plays a role in cholestanol metabolism in the cerebellum. Similarly to cholesterol, hydroxylates cholestanol and may facilitate sterol diffusion through the blood-brain barrier to the systemic circulation for further degradation. Also hydroxylates retinal 7-ketocholesterol, a noxious oxysterol with pro-inflammatory and pro-apoptotic effects, and may play a role in its elimination from the retinal pigment epithelium. May play a redundant role in vitamin D biosynthesis. Catalyzes 25-hydroxylation of vitamin D3 that is required for its conversion to a functionally active form. The polypeptide is Sterol 26-hydroxylase, mitochondrial (CYP27A1) (Oryctolagus cuniculus (Rabbit)).